The chain runs to 204 residues: Dephospho-CoA kinase (204 aa).

One can recognise a DPCK domain in the interval 5–204; that stretch reads VVGLTGGIGS…YLANLVKAML (200 aa). 13-18 contributes to the ATP binding site; sequence GSGKSA.

It belongs to the CoaE family.

It localises to the cytoplasm. The catalysed reaction is 3'-dephospho-CoA + ATP = ADP + CoA + H(+). The protein operates within cofactor biosynthesis; coenzyme A biosynthesis; CoA from (R)-pantothenate: step 5/5. Catalyzes the phosphorylation of the 3'-hydroxyl group of dephosphocoenzyme A to form coenzyme A. The polypeptide is Dephospho-CoA kinase (Chromobacterium violaceum (strain ATCC 12472 / DSM 30191 / JCM 1249 / CCUG 213 / NBRC 12614 / NCIMB 9131 / NCTC 9757 / MK)).